A 114-amino-acid polypeptide reads, in one-letter code: Iron-sulfur cluster insertion protein ErpA (114 aa).

3 residues coordinate iron-sulfur cluster: cysteine 42, cysteine 106, and cysteine 108.

It belongs to the HesB/IscA family. In terms of assembly, homodimer. It depends on iron-sulfur cluster as a cofactor.

Required for insertion of 4Fe-4S clusters for at least IspG. The sequence is that of Iron-sulfur cluster insertion protein ErpA from Buchnera aphidicola subsp. Acyrthosiphon pisum (strain APS) (Acyrthosiphon pisum symbiotic bacterium).